Consider the following 485-residue polypeptide: Noelin (485 aa).

Residues Met-1–Ala-16 form the signal peptide. Asn-33, Asn-103, Asn-187, Asn-288, Asn-307, Asn-394, Asn-431, and Asn-473 each carry an N-linked (GlcNAc...) asparagine glycan. A coiled-coil region spans residues Arg-87–Leu-225. Residues Ala-226 to His-478 form the Olfactomedin-like domain. A disulfide bridge links Cys-227 with Cys-409.

In terms of assembly, homotetramer; disulfide-linked. Dimer of dimers, giving rise to a V-shaped homotretramer. Component of the AMPAR complex. Post-translationally, glycosylated.

It localises to the secreted. Its subcellular location is the synapse. It is found in the endoplasmic reticulum. The protein localises to the cell projection. The protein resides in the axon. It localises to the perikaryon. Functionally, contributes to the regulation of axonal growth. May play an important role in regulating the production of neural crest cells by the neural tube. This Gallus gallus (Chicken) protein is Noelin (OLFM1).